Consider the following 178-residue polypeptide: Large ribosomal subunit protein uL6 (178 aa).

This sequence belongs to the universal ribosomal protein uL6 family. In terms of assembly, part of the 50S ribosomal subunit.

In terms of biological role, this protein binds to the 23S rRNA, and is important in its secondary structure. It is located near the subunit interface in the base of the L7/L12 stalk, and near the tRNA binding site of the peptidyltransferase center. The sequence is that of Large ribosomal subunit protein uL6 from Natranaerobius thermophilus (strain ATCC BAA-1301 / DSM 18059 / JW/NM-WN-LF).